The primary structure comprises 428 residues: Enolase (428 aa).

Gln163 lines the (2R)-2-phosphoglycerate pocket. The active-site Proton donor is the Glu205. Positions 242, 285, and 312 each coordinate Mg(2+). (2R)-2-phosphoglycerate-binding residues include Lys337, Arg366, Ser367, and Lys388. Residue Lys337 is the Proton acceptor of the active site.

It belongs to the enolase family. The cofactor is Mg(2+).

It localises to the cytoplasm. It is found in the secreted. The protein localises to the cell surface. It catalyses the reaction (2R)-2-phosphoglycerate = phosphoenolpyruvate + H2O. The protein operates within carbohydrate degradation; glycolysis; pyruvate from D-glyceraldehyde 3-phosphate: step 4/5. In terms of biological role, catalyzes the reversible conversion of 2-phosphoglycerate (2-PG) into phosphoenolpyruvate (PEP). It is essential for the degradation of carbohydrates via glycolysis. The polypeptide is Enolase (Neisseria meningitidis serogroup B (strain ATCC BAA-335 / MC58)).